We begin with the raw amino-acid sequence, 52 residues long: ERMES regulator 1 (52 aa).

Residues 1–27 (MIFFFNQIRSIFTALHTPTQQIQLSRR) lie on the Mitochondrial intermembrane side of the membrane. The chain crosses the membrane as a helical span at residues 28–46 (AFFQFLGYLGSCVVISLAA). Residues 47-52 (QSKYVQ) are Cytoplasmic-facing.

This sequence belongs to the EMR1 family.

Its subcellular location is the mitochondrion outer membrane. Functionally, mediates the formation of endoplasmic reticulum (ER)-mitochondria encounter structure (ERMES) foci, thereby contributing to the formation of ER-mitochondrial contact sites. The chain is ERMES regulator 1 from Saccharomyces cerevisiae (strain ATCC 204508 / S288c) (Baker's yeast).